We begin with the raw amino-acid sequence, 129 residues long: Lysozyme C (129 aa).

The region spanning 1–129 (KVYGRCELAA…VNAWIRGCRL (129 aa)) is the C-type lysozyme domain. 4 disulfides stabilise this stretch: C6–C127, C30–C115, C64–C80, and C76–C94. Residues E35 and D52 contribute to the active site.

This sequence belongs to the glycosyl hydrolase 22 family. In terms of assembly, monomer.

Its subcellular location is the secreted. It catalyses the reaction Hydrolysis of (1-&gt;4)-beta-linkages between N-acetylmuramic acid and N-acetyl-D-glucosamine residues in a peptidoglycan and between N-acetyl-D-glucosamine residues in chitodextrins.. Lysozymes have primarily a bacteriolytic function; those in tissues and body fluids are associated with the monocyte-macrophage system and enhance the activity of immunoagents. In Syrmaticus reevesii (Reeves's pheasant), this protein is Lysozyme C (LYZ).